Consider the following 882-residue polypeptide: Liprin-beta-2 (882 aa).

A coiled-coil region spans residues 101–303 (AASNETYQER…DKDRRIEELT (203 aa)). Phosphoserine is present on residues Ser328, Ser362, and Ser386. A disordered region spans residues 339-554 (RKWNTTNKSP…SRTRDTKGQK (216 aa)). A compositionally biased stretch (basic and acidic residues) spans 388-399 (EDLRRESGDKCV). 2 stretches are compositionally biased toward polar residues: residues 442 to 457 (PTAS…SQPK) and 481 to 495 (SSAS…QSPV). Ser502 and Ser518 each carry phosphoserine. A compositionally biased stretch (basic residues) spans 502-515 (SPKGIKKFWGKIRR). 3 SAM domains span residues 564 to 628 (WSTE…INAK), 636 to 699 (LDHI…LHVN), and 724 to 789 (WSNH…KFNA).

It belongs to the liprin family. Liprin-beta subfamily. In terms of assembly, forms homodimers and heterodimers. As to expression, expressed widely. Strong expression in liver, kidney, intestine, heart, lung and testis. Low expression in brain and thymus.

May regulate the disassembly of focal adhesions. Did not bind receptor-like tyrosine phosphatases type 2A. This is Liprin-beta-2 (Ppfibp2) from Mus musculus (Mouse).